A 357-amino-acid polypeptide reads, in one-letter code: Cytoplasmic tRNA 2-thiolation protein 1 (357 aa).

The segment at 314 to 348 (GVSRTRGRRGEKAGLHPDVGRGGGGGSSGPAEVAS) is disordered. A compositionally biased stretch (basic and acidic residues) spans 321-332 (RRGEKAGLHPDV).

It belongs to the TtcA family. CTU1/NCS6/ATPBD3 subfamily.

The protein localises to the cytoplasm. Its pathway is tRNA modification; 5-methoxycarbonylmethyl-2-thiouridine-tRNA biosynthesis. In terms of biological role, plays a central role in 2-thiolation of mcm(5)S(2)U at tRNA wobble positions of tRNA(Lys), tRNA(Glu) and tRNA(Gln). Directly binds tRNAs and probably acts by catalyzing adenylation of tRNAs, an intermediate required for 2-thiolation. It is unclear whether it acts as a sulfurtransferase that transfers sulfur from thiocarboxylated URM1 onto the uridine of tRNAs at wobble position. This Chlamydomonas reinhardtii (Chlamydomonas smithii) protein is Cytoplasmic tRNA 2-thiolation protein 1.